A 418-amino-acid chain; its full sequence is Hydroxysqualene dehydroxylase (418 aa).

Belongs to the HpnE family.

The catalysed reaction is squalene + FAD + H2O + H(+) = hydroxysqualene + FADH2. The protein operates within secondary metabolite biosynthesis; hopanoid biosynthesis. In terms of biological role, involved in the biosynthesis of the hopanoid precursor squalene (SQ) from farnesyl diphosphate (FPP). Catalyzes the third (last) step, the reduction of hydroxysqualene (HSQ) to SQ. The polypeptide is Hydroxysqualene dehydroxylase (Rhodopseudomonas palustris (strain ATCC BAA-98 / CGA009)).